A 258-amino-acid polypeptide reads, in one-letter code: Microtubule-associated protein RP/EB family member 1 (258 aa).

Positions Asn14–Asp116 constitute a Calponin-homology (CH) domain. Residues Lys175 to Ile245 enclose the EB1 C-terminal domain.

This sequence belongs to the MAPRE family.

The protein localises to the cytoplasm. Its subcellular location is the cytoskeleton. It localises to the microtubule organizing center. It is found in the centrosome. The protein resides in the golgi apparatus. The protein localises to the spindle. Its subcellular location is the spindle pole. Plus-end tracking protein (+TIP) that binds to the plus-end of microtubules and regulates the dynamics of the microtubule cytoskeleton. Promotes cytoplasmic microtubule nucleation and elongation. Involved in mitotic spindle positioning by stabilizing microtubules and promoting dynamic connection between astral microtubules and the cortex during mitotic chromosome segregation. The chain is Microtubule-associated protein RP/EB family member 1 (MAPRE1) from Gallus gallus (Chicken).